The primary structure comprises 179 residues: MIISEANRKEICKYLFKEGVCFAKKDFNLAKHPLIDVPNLQVIKLMQSFKSKEYVRETFAWMHYYWFLTNEGIEFLRTYLNLPSDVVPATLKKSAKPGGRPFGGPPGDRSRGPRHEGGDRPRFGDRDGYRAGPRAGGEFGGEKGGAPADYQPSFQGSGRGFGRGAGGYSAAAPSGSGLP.

Positions 90–179 are disordered; that stretch reads TLKKSAKPGG…AAAPSGSGLP (90 aa). Residues 108-129 show a composition bias toward basic and acidic residues; the sequence is DRSRGPRHEGGDRPRFGDRDGY. Residues 134-144 show a composition bias toward gly residues; that stretch reads RAGGEFGGEKG. A compositionally biased stretch (low complexity) spans 145–156; sequence GAPADYQPSFQG. Residues 157–167 are compositionally biased toward gly residues; that stretch reads SGRGFGRGAGG. The segment covering 168–179 has biased composition (low complexity); it reads YSAAAPSGSGLP.

Belongs to the eukaryotic ribosomal protein eS10 family.

The protein localises to the cytoplasm. In Arabidopsis thaliana (Mouse-ear cress), this protein is Small ribosomal subunit protein eS10x (RPS10C).